The sequence spans 419 residues: Probable dual-specificity RNA methyltransferase RlmN (419 aa).

Positions 1–21 (MTAESDSPDGPVSAGTGRPVR) are disordered. The Proton acceptor role is filled by E124. The Radical SAM core domain occupies 130-369 (YPDRATVCVS…ATTVRDTRGR (240 aa)). C137 and C375 are oxidised to a cystine. 3 residues coordinate [4Fe-4S] cluster: C144, C148, and C151. Residues 199–200 (GE), S233, 256–258 (SLH), and N332 contribute to the S-adenosyl-L-methionine site. C375 functions as the S-methylcysteine intermediate in the catalytic mechanism. The tract at residues 383–419 (AGRARRVESARPVESARPVGVAGAASGSPAHGSRVLR) is disordered. Residues 397-419 (SARPVGVAGAASGSPAHGSRVLR) show a composition bias toward low complexity.

This sequence belongs to the radical SAM superfamily. RlmN family. Requires [4Fe-4S] cluster as cofactor.

Its subcellular location is the cytoplasm. The enzyme catalyses adenosine(2503) in 23S rRNA + 2 reduced [2Fe-2S]-[ferredoxin] + 2 S-adenosyl-L-methionine = 2-methyladenosine(2503) in 23S rRNA + 5'-deoxyadenosine + L-methionine + 2 oxidized [2Fe-2S]-[ferredoxin] + S-adenosyl-L-homocysteine. The catalysed reaction is adenosine(37) in tRNA + 2 reduced [2Fe-2S]-[ferredoxin] + 2 S-adenosyl-L-methionine = 2-methyladenosine(37) in tRNA + 5'-deoxyadenosine + L-methionine + 2 oxidized [2Fe-2S]-[ferredoxin] + S-adenosyl-L-homocysteine. In terms of biological role, specifically methylates position 2 of adenine 2503 in 23S rRNA and position 2 of adenine 37 in tRNAs. The protein is Probable dual-specificity RNA methyltransferase RlmN of Frankia alni (strain DSM 45986 / CECT 9034 / ACN14a).